The following is a 148-amino-acid chain: Oleosin 16 kDa (148 aa).

The disordered stretch occupies residues 1–21; sequence MADQHRGVIGGGGYGDRGGQE. The residue at position 2 (Ala2) is an N-acetylalanine. The interval 2–34 is polar; it reads ADQHRGVIGGGGYGDRGGQEQQEKQPFMMTALK. The segment covering 8–17 has biased composition (gly residues); the sequence is VIGGGGYGDR. The segment at 35–106 is hydrophobic; the sequence is TVTAATAGGS…AALSVFSWMY (72 aa). 3 consecutive transmembrane segments (helical) span residues 43–63, 66–86, and 87–107; these read GSMLVLSGLILAGTVIALTVA, VLVIFSPVLVPAAIALALMAA, and GFVTSGGLGVAALSVFSWMYK.

Belongs to the oleosin family.

Its subcellular location is the lipid droplet. The protein localises to the membrane. In terms of biological role, may have a structural role to stabilize the lipid body during desiccation of the seed by preventing coalescence of the oil. Probably interacts with both lipid and phospholipid moieties of lipid bodies. May also provide recognition signals for specific lipase anchorage in lipolysis during seedling growth. This chain is Oleosin 16 kDa (OLE16), found in Oryza sativa subsp. japonica (Rice).